The chain runs to 295 residues: Tyrosine recombinase XerC (295 aa).

Residues 1–85 enclose the Core-binding (CB) domain; it reads MQTYLQKYWN…ALRQFLAFLV (85 aa). One can recognise a Tyr recombinase domain in the interval 106–285; sequence HLPKNINAEQ…NFQHLAEVYD (180 aa). Catalysis depends on residues arginine 145, lysine 169, histidine 237, arginine 240, and histidine 263. The active-site O-(3'-phospho-DNA)-tyrosine intermediate is the tyrosine 272.

It belongs to the 'phage' integrase family. XerC subfamily. Forms a cyclic heterotetrameric complex composed of two molecules of XerC and two molecules of XerD.

It localises to the cytoplasm. Functionally, site-specific tyrosine recombinase, which acts by catalyzing the cutting and rejoining of the recombining DNA molecules. The XerC-XerD complex is essential to convert dimers of the bacterial chromosome into monomers to permit their segregation at cell division. It also contributes to the segregational stability of plasmids. In Mannheimia succiniciproducens (strain KCTC 0769BP / MBEL55E), this protein is Tyrosine recombinase XerC.